The chain runs to 203 residues: Sporulation delaying protein C (203 aa).

The first 32 residues, 1 to 32, serve as a signal peptide directing secretion; the sequence is MKSKLLRLLIVSMVTILVFSLVGLSKESSTSA. Positions 33 to 140 are cleaved as a propeptide — removed in mature form; the sequence is KENHTFSGED…KYSSNKVTPS (108 aa). A disulfide bridge links Cys-141 with Cys-147. Residues 183 to 203 constitute a propeptide, removed in mature form; the sequence is SASNNSDLEAAAAKTLKLIHQ.

As to quaternary structure, proprotein probably interacts with chaperone CsaA. Post-translationally, production of active SDP (able to induce SdpI and kill cells) is a multi-step process that requires signal peptide cleavage (probably by SipS or SipT) as well as SdpA and SdpB. The disulfide bond is not required for maximum toxicity.

It is found in the secreted. Its function is as follows. Produces a 42-residue extracellular sporulation delaying protein (SDP) that collapses the proton motive force (probably both the membrane potential and pH gradient) across the cell membrane, which leads to autolysis; may form a proton channel. Induces the lysis of other B.subtilis cells that have not entered the sporulation pathway, inducing cannibalism to provide a source of nutrients to support sporulation, and at the same time delaying commitment to the energetically expensive and irreversible onset of sporulation. Addition of SDP to liquid cultures halts growth, leads to increased cell permeability and eventually cell lysis in a significant subset of the population, although some cells survive and resume growth after a lag period. Effects of SDP are irreversible within 10 minutes. Addition of SDP to solid cultures induces killing, it is much more effective than SKF (AC O31422). Has antibiotic action against Gram-positive Firmicutes (L.acidophilus, M.megaterium, P.polymyxa, S.aureus, S.epidermidis) but not Actinobacteria M.luteus or Gram-negative P.aeruginosa or K.pneumoniae. SDP induces expression of the sdpR-sdpI operon. Its maturation is dependent on SdpA and SdpB. Also functions as a ligand, binds to SdpI triggering a signal transduction cascade that protects the cell against the toxic effects of its own SDP. In Bacillus subtilis (strain 168), this protein is Sporulation delaying protein C.